The primary structure comprises 338 residues: DNA-directed RNA polymerase subunit alpha (338 aa).

The segment at 1–234 (MIHKNWQELI…DQLSIFVNFD (234 aa)) is alpha N-terminal domain (alpha-NTD). An alpha C-terminal domain (alpha-CTD) region spans residues 250-338 (FNPLLLKKVD…ELAKKYEDNF (89 aa)).

It belongs to the RNA polymerase alpha chain family. As to quaternary structure, homodimer. The RNAP catalytic core consists of 2 alpha, 1 beta, 1 beta' and 1 omega subunit. When a sigma factor is associated with the core the holoenzyme is formed, which can initiate transcription.

The catalysed reaction is RNA(n) + a ribonucleoside 5'-triphosphate = RNA(n+1) + diphosphate. Functionally, DNA-dependent RNA polymerase catalyzes the transcription of DNA into RNA using the four ribonucleoside triphosphates as substrates. The polypeptide is DNA-directed RNA polymerase subunit alpha (Jannaschia sp. (strain CCS1)).